Consider the following 359-residue polypeptide: C-X-C chemokine receptor type 4 (359 aa).

The segment at 1-23 (MEPISVSIYTSDNYSEEVGSGDY) is important for chemokine binding and signaling. At 1-40 (MEPISVSIYTSDNYSEEVGSGDYDSNKEPCFRDENVHFNR) the chain is on the extracellular side. Sulfotyrosine is present on Tyr-9. An N-linked (GlcNAc...) asparagine glycan is attached at Asn-13. Residue Tyr-14 is modified to Sulfotyrosine. Residue Ser-20 is glycosylated (O-linked (Xyl...) (chondroitin sulfate) serine). Tyr-23 carries the post-translational modification Sulfotyrosine. Disulfide bonds link Cys-30–Cys-281 and Cys-111–Cys-193. The helical transmembrane segment at 41 to 65 (IFLPTIYFIIFLTGIVGNGLVILVM) threads the bilayer. Over 66-79 (GYQKKLRSMTDKYR) the chain is Cytoplasmic. A helical membrane pass occupies residues 80–101 (LHLSVADLLFVITLPFWAVDAM). Residues 96-99 (WAVD) are chemokine binding. Residues 102–112 (ADWYFGKFLCK) are Extracellular-facing. A helical membrane pass occupies residues 113–132 (AVHIIYTVNLYSSVLILAFI). The tract at residues 115–119 (HIIYT) is chemokine binding. At 133-156 (SLDRYLAIVHATNSQRPRKLLAEK) the chain is on the cytoplasmic side. Residues 135–137 (DRY) carry the Important for signaling motif. The interval 137-149 (YLAIVHATNSQRP) is involved in dimerization; when bound to chemokine. A helical membrane pass occupies residues 157-176 (AVYVGVWIPALLLTIPDFIF). At 177 to 202 (ADVSQGDISQGDDRYICDRLYPDSLW) the chain is on the extracellular side. Residues 193-197 (CDRLY) are chemokine binding, important for signaling. The tract at residues 198 to 217 (PDSLWMVVFQFQHIMVGLIL) is involved in dimerization. The helical transmembrane segment at 203–223 (MVVFQFQHIMVGLILPGIVIL) threads the bilayer. At 224-248 (SCYCIIISKLSHSKGHQKRKALKTT) the chain is on the cytoplasmic side. The helical transmembrane segment at 249-268 (VILILAFFACWLPYYVGISI) threads the bilayer. Residues 269–289 (DSFILLGVIKQGCDFESIVHK) lie on the Extracellular side of the membrane. The segment at 273-275 (LLG) is involved in dimerization. The chain crosses the membrane as a helical span at residues 290 to 309 (WISITEALAFFHCCLNPILY). Topologically, residues 310–359 (AFLGAKFKSSAQHALNSMSRGSSLKILSKGKRGGHSSVSTESESSSFHSS) are cytoplasmic. Ser-326 and Ser-328 each carry phosphoserine. Ser-331 and Ser-332 each carry phosphoserine; by PKC and GRK6. A disordered region spans residues 335–359 (ILSKGKRGGHSSVSTESESSSFHSS). Ser-337 carries the post-translational modification Phosphoserine; by GRK6. Residue Lys-338 forms a Glycyl lysine isopeptide (Lys-Gly) (interchain with G-Cter in ubiquitin) linkage. Low complexity predominate over residues 344 to 359 (HSSVSTESESSSFHSS). Ser-346 is subject to Phosphoserine; by GRK6. Phosphoserine occurs at positions 355 and 358.

The protein belongs to the G-protein coupled receptor 1 family. Monomer. Can form homodimers. Interacts with CD164. Interacts with ARRB2; the interaction is dependent on the C-terminal phosphorylation of CXCR4 and allows activation of MAPK1 and MAPK3. Interacts with ARR3; the interaction is dependent on the C-terminal phosphorylation of CXCR4 and modulates calcium mobilization. Interacts with RNF113A; the interaction, enhanced by CXCL12, promotes CXCR4 ubiquitination and subsequent degradation. Interacts (via the cytoplasmic C-terminal) with ITCH (via the WW domains I and II); the interaction, enhanced by CXCL12, promotes CXCR4 ubiquitination and leads to its degradation. Interacts with extracellular ubiquitin. Interacts with DBN1; this interaction is enhanced by antigenic stimulation. Following LPS binding, may form a complex with GDF5, HSP90AA1 and HSPA8. Post-translationally, phosphorylated on agonist stimulation. Rapidly phosphorylated on serine and threonine residues in the C-terminal. Phosphorylation at Ser-331 and Ser-332 leads to recruitment of ITCH, ubiquitination and protein degradation. In terms of processing, ubiquitinated after ligand binding, leading to its degradation. Ubiquitinated by ITCH at the cell membrane on agonist stimulation. The ubiquitin-dependent mechanism, endosomal sorting complex required for transport (ESCRT), then targets CXCR4 for lysosomal degradation. This process is dependent also on prior Ser-/Thr-phosphorylation in the C-terminal of CXCR4. Also binding of ARRB1 to STAM negatively regulates CXCR4 sorting to lysosomes though modulating ubiquitination of SFR5S. Sulfation is required for efficient binding of CXCL12/SDF-1alpha and promotes its dimerization. Post-translationally, O- and N-glycosylated. N-glycosylation can mask coreceptor function. The O-glycosylation chondroitin sulfate attachment does not affect interaction with CXCL12/SDF-1alpha nor its coreceptor activity. Lymphocytes, macrophages, neutrophils, microglial cells and astrocytes. Found in spleen, thymus, bone marrow, lymph nodes and, at lower levels in brain, small intestine, stomach and kidney. CXCR4-A is predominant in all tissues tested. During embryonic development, high levels are detected in the endothelium of developing blood vessels and in many regions of the developing brain including the olfactory epithelium, olfactory bulb, hippocampus, cerebellum and spinal cord.

It is found in the cell membrane. Its subcellular location is the cell junction. It localises to the early endosome. The protein localises to the late endosome. The protein resides in the lysosome. Receptor for the C-X-C chemokine CXCL12/SDF-1 that transduces a signal by increasing intracellular calcium ion levels and enhancing MAPK1/MAPK3 activation. Involved in the AKT signaling cascade. Plays a role in regulation of cell migration, e.g. during wound healing. Acts as a receptor for extracellular ubiquitin; leading to enhanced intracellular calcium ions and reduced cellular cAMP levels. Binds bacterial lipopolysaccharide (LPS) et mediates LPS-induced inflammatory response, including TNF secretion by monocytes. Involved in hematopoiesis and in cardiac ventricular septum formation. Also plays an essential role in vascularization of the gastrointestinal tract, probably by regulating vascular branching and/or remodeling processes in endothelial cells. Involved in cerebellar development. In the CNS, could mediate hippocampal-neuron survival. This Mus musculus (Mouse) protein is C-X-C chemokine receptor type 4 (Cxcr4).